The sequence spans 623 residues: Protein vein (623 aa).

The signal sequence occupies residues 1–40; that stretch reads MYAQHLRKWSLKTKKQLMPLILLIISYMLLLNTCVLSSSA. Disordered stretches follow at residues 70–98, 130–162, 184–214, and 229–317; these read IPLS…SSNN, DAGS…SMQK, AASS…NYSS, and PESM…QRYN. Low complexity-rich tracts occupy residues 72 to 98 and 136 to 158; these read LSSD…SSNN and PAQQ…QQQQ. N76 carries an N-linked (GlcNAc...) asparagine glycan. The N-linked (GlcNAc...) asparagine glycan is linked to N211. Positions 233–248 are enriched in basic and acidic residues; sequence LEDRSPEQAARSRRDG. N-linked (GlcNAc...) asparagine glycosylation occurs at N252. Residues 255-267 show a composition bias toward low complexity; sequence RQQQRTGHRQQLQ. The segment covering 305 to 316 has biased composition (basic residues); the sequence is QRRKHQRKHQRY. N-linked (GlcNAc...) asparagine glycans are attached at residues N350, N381, N424, N449, N521, and N574. The 86-residue stretch at 457–542 folds into the Ig-like C2-type domain; sequence TKIFSKPSKA…AKNKASKAIA (86 aa). Cystine bridges form between C478/C531, C566/C577, C571/C588, and C590/C599. One can recognise an EGF-like domain in the interval 561-599; it reads ASGIPCNFDYCFHNGTCRMIPDINEVYCRCPTEYFGNRC.

It is found in the secreted. Its function is as follows. Ligand for the EGF receptor. Seems to play a role in the global proliferation of wing disc cells and the larval patterning. Shows a strong synergistic genetic interaction with spi, suggesting a molecular interdependence. Required for the development of interveins cells. The chain is Protein vein (vn) from Drosophila melanogaster (Fruit fly).